Consider the following 723-residue polypeptide: Hypoxia-inducible factor prolyl hydroxylase (723 aa).

Residues Cys39, Cys42, Cys54, Cys57, Cys63, His67, His75, and Cys79 each contribute to the Zn(2+) site. Residues Cys39–Cys79 form an MYND-type; atypical zinc finger. Over residues Pro249 to Ser270 the composition is skewed to low complexity. Disordered regions lie at residues Pro249–Thr275 and Ile294–Tyr323. Residues Gly468–Asp566 form the Fe2OG dioxygenase domain. 3 residues coordinate Fe cation: His487, Asp489, and His548. A 2-oxoglutarate-binding site is contributed by Arg557. A disordered region spans residues Arg678–Ile723. The segment covering Asp687–Ser699 has biased composition (basic and acidic residues).

As to quaternary structure, interacts (via catalytic domain) with lin-10 (via N-terminus); the interaction regulates lin-10 subcellular localization; the interaction is direct. Interacts (via catalytic domain) with swan-1 (via WD 1-3 repeats); the interaction may regulate vhl-1-independent hif-1 transcriptional activity; the interaction is direct. Interacts (via C-terminus) with cysl-1; the interaction is enhanced by hydrogen disulfide and activates hif-1-mediated transcription; the interaction is direct. Fe(2+) is required as a cofactor. It depends on L-ascorbate as a cofactor. As to expression, in larvae and adults, expressed in pharyngeal and body wall muscles.

Its subcellular location is the cytoplasm. The protein resides in the nucleus. It is found in the cell projection. It localises to the dendrite. The protein localises to the axon. The catalysed reaction is L-prolyl-[hypoxia-inducible factor alpha subunit] + 2-oxoglutarate + O2 = trans-4-hydroxy-L-prolyl-[hypoxia-inducible factor alpha subunit] + succinate + CO2. Its activity is regulated as follows. Inhibited by Co(2+) and dimethyloxalylglycine. Inhibited by the iron chelator 2, 2'-dipyridyl. Cellular oxygen sensor which regulates the stability and the activity of hypoxia-inducible transcription factor, hif-1. In normoxic conditions, hydroxylates hif-1 targeting it for vhl-1-mediated proteasomal degradation. In addition, regulates hif-1 transcriptional activity in a vhl-1-independent manner and independently of its hydroxylase activity. By regulating hif-1 activity, controls several cellular responses. Mediates susceptibility to B.thuringiensis and V.cholerae pore-forming toxins and enteropathogenic E.coli. Mediates susceptibility to P.aeruginosa PAO1-mediated killing by regulating resistance to cyanide produced by P.aeruginosa. Mediates resistance to S.aureus-mediated killing. In addition, plays a role in heat acclimation, neuronal development, behavioral responses to reoxygenation and hydrogen sulfide, iron homeostasis and aging. In neurons, involved in mitochondrion fusion during reoxygenation. Involved in egg laying. Functionally, regulates the trafficking of the glutamate receptor glr-1, probably independently of hif-1, by regulating lin-10 subcellular localization in response to oxygen levels. May hydroxylate lin-10. This Caenorhabditis elegans protein is Hypoxia-inducible factor prolyl hydroxylase.